Reading from the N-terminus, the 394-residue chain is NAD(P)H-quinone oxidoreductase subunit H (394 aa).

The protein belongs to the complex I 49 kDa subunit family. As to quaternary structure, NDH-1 can be composed of about 15 different subunits; different subcomplexes with different compositions have been identified which probably have different functions.

Its subcellular location is the cellular thylakoid membrane. It catalyses the reaction a plastoquinone + NADH + (n+1) H(+)(in) = a plastoquinol + NAD(+) + n H(+)(out). The enzyme catalyses a plastoquinone + NADPH + (n+1) H(+)(in) = a plastoquinol + NADP(+) + n H(+)(out). NDH-1 shuttles electrons from an unknown electron donor, via FMN and iron-sulfur (Fe-S) centers, to quinones in the respiratory and/or the photosynthetic chain. The immediate electron acceptor for the enzyme in this species is believed to be plastoquinone. Couples the redox reaction to proton translocation, and thus conserves the redox energy in a proton gradient. Cyanobacterial NDH-1 also plays a role in inorganic carbon-concentration. The protein is NAD(P)H-quinone oxidoreductase subunit H of Prochlorococcus marinus (strain MIT 9211).